The sequence spans 65 residues: UPF0337 protein BCE_1081 (65 aa).

The interval 1–28 (MSGGLKEQITGKVEKTKGQVKEGIGEVT) is disordered. The span at 12–28 (KVEKTKGQVKEGIGEVT) shows a compositional bias: basic and acidic residues.

This sequence belongs to the UPF0337 (CsbD) family.

This is UPF0337 protein BCE_1081 from Bacillus cereus (strain ATCC 10987 / NRS 248).